The primary structure comprises 652 residues: Acetyl-coenzyme A synthetase (652 aa).

CoA contacts are provided by residues 191-194 (RAGR), Thr311, and Asn335. Residues 387-389 (GEP), 411-416 (DTWWQT), Asp500, and Arg515 contribute to the ATP site. Ser523 serves as a coordination point for CoA. An ATP-binding site is contributed by Arg526. Val537, His539, and Ile542 together coordinate Mg(2+). Arg584 provides a ligand contact to CoA. An N6-acetyllysine modification is found at Lys609.

Belongs to the ATP-dependent AMP-binding enzyme family. Mg(2+) is required as a cofactor. Post-translationally, acetylated. Deacetylation by the SIR2-homolog deacetylase activates the enzyme.

It catalyses the reaction acetate + ATP + CoA = acetyl-CoA + AMP + diphosphate. Catalyzes the conversion of acetate into acetyl-CoA (AcCoA), an essential intermediate at the junction of anabolic and catabolic pathways. Acs undergoes a two-step reaction. In the first half reaction, Acs combines acetate with ATP to form acetyl-adenylate (AcAMP) intermediate. In the second half reaction, it can then transfer the acetyl group from AcAMP to the sulfhydryl group of CoA, forming the product AcCoA. Its function is as follows. Enables the cell to use acetate during aerobic growth to generate energy via the TCA cycle, and biosynthetic compounds via the glyoxylate shunt. Acetylates CheY, the response regulator involved in flagellar movement and chemotaxis. This chain is Acetyl-coenzyme A synthetase, found in Escherichia coli O6:H1 (strain CFT073 / ATCC 700928 / UPEC).